The primary structure comprises 66 residues: Photosystem II reaction center protein J (66 aa).

Residues 1–27 (MSGKKSGLPDGRVPDRNPDGTPAVPWK) are disordered. Residues 37–57 (LWLVATAGGMAVMFVVGLFFY) traverse the membrane as a helical segment.

This sequence belongs to the PsbJ family. PSII is composed of 1 copy each of membrane proteins PsbA, PsbB, PsbC, PsbD, PsbE, PsbF, PsbH, PsbI, PsbJ, PsbK, PsbL, PsbM, PsbT, PsbX, PsbY, PsbZ, Psb30/Ycf12, peripheral proteins PsbO, CyanoQ (PsbQ), PsbU, PsbV and a large number of cofactors. It forms dimeric complexes.

Its subcellular location is the cellular thylakoid membrane. Functionally, one of the components of the core complex of photosystem II (PSII). PSII is a light-driven water:plastoquinone oxidoreductase that uses light energy to abstract electrons from H(2)O, generating O(2) and a proton gradient subsequently used for ATP formation. It consists of a core antenna complex that captures photons, and an electron transfer chain that converts photonic excitation into a charge separation. The protein is Photosystem II reaction center protein J of Synechococcus sp. (strain RCC307).